The primary structure comprises 292 residues: NAD kinase (292 aa).

Residue aspartate 73 is the Proton acceptor of the active site. Residues 73–74 (DG), 147–148 (NE), histidine 158, arginine 175, aspartate 177, 188–193 (TAYSLS), and glutamine 247 each bind NAD(+).

Belongs to the NAD kinase family. A divalent metal cation serves as cofactor.

It is found in the cytoplasm. The catalysed reaction is NAD(+) + ATP = ADP + NADP(+) + H(+). Functionally, involved in the regulation of the intracellular balance of NAD and NADP, and is a key enzyme in the biosynthesis of NADP. Catalyzes specifically the phosphorylation on 2'-hydroxyl of the adenosine moiety of NAD to yield NADP. The sequence is that of NAD kinase from Shigella dysenteriae serotype 1 (strain Sd197).